The following is a 253-amino-acid chain: Adenosylcobinamide-GDP ribazoletransferase (253 aa).

The next 4 helical transmembrane spans lie at 33 to 53, 106 to 126, 132 to 152, and 178 to 198; these read ISPLIIGISLALIESAVYVLL, IGSGGIGLLLVYLSIQIVALL, FYTIFHLISSNVLSMTIGLYI, and VLLLELIPFISLYNIIVFLVF.

Belongs to the CobS family. The cofactor is Mg(2+).

It is found in the cell membrane. The catalysed reaction is alpha-ribazole + adenosylcob(III)inamide-GDP = adenosylcob(III)alamin + GMP + H(+). It catalyses the reaction alpha-ribazole 5'-phosphate + adenosylcob(III)inamide-GDP = adenosylcob(III)alamin 5'-phosphate + GMP + H(+). The protein operates within cofactor biosynthesis; adenosylcobalamin biosynthesis; adenosylcobalamin from cob(II)yrinate a,c-diamide: step 7/7. Its function is as follows. Joins adenosylcobinamide-GDP and alpha-ribazole to generate adenosylcobalamin (Ado-cobalamin). Also synthesizes adenosylcobalamin 5'-phosphate from adenosylcobinamide-GDP and alpha-ribazole 5'-phosphate. In Saccharolobus islandicus (strain Y.G.57.14 / Yellowstone #1) (Sulfolobus islandicus), this protein is Adenosylcobinamide-GDP ribazoletransferase.